We begin with the raw amino-acid sequence, 679 residues long: Protein polyglycylase TTLL10 (679 aa).

Residues 1 to 15 show a composition bias toward basic residues; it reads MPLHPPARRPHGHRR. 3 disordered regions span residues 1–33, 49–77, and 96–124; these read MPLHPPARRPHGHRRNGSEAQTEATTQDTGRLS, GHRAARRPRRGVGTTSASRAPRPGALMPA, and VSFKRPKRSRTHQSHTKVPGWTHEKRMGS. Residues 18–30 are compositionally biased toward polar residues; that stretch reads SEAQTEATTQDTG. The span at 96–110 shows a compositional bias: basic residues; it reads VSFKRPKRSRTHQSH. Residues 172–543 enclose the TTL domain; that stretch reads QGPFFYIGGT…TCQKSLHSQK (372 aa). Residues lysine 304, 310 to 311, 353 to 356, 366 to 368, and 409 to 410 contribute to the ATP site; these read QG, QRYV, KFD, and TN. Glutamine 310 contributes to the a protein binding site. Aspartate 489, glutamate 502, and asparagine 504 together coordinate Mg(2+). Positions 605 to 679 are disordered; that stretch reads DRPAARKSMS…EQRSTSHRGS (75 aa).

Mg(2+) is required as a cofactor.

The protein resides in the cytoplasm. The protein localises to the cytoskeleton. It localises to the cell projection. It is found in the cilium. Its subcellular location is the cilium axoneme. It carries out the reaction (glycyl)(n)-glycyl-L-glutamyl-[protein] + glycine + ATP = (glycyl)(n+1)-glycyl-L-glutamyl-[protein] + ADP + phosphate + H(+). Functionally, polyglycylase which modifies both tubulin and non-tubulin proteins, generating polyglycine side chains of variable lengths on the gamma-carboxyl groups of specific glutamate residues of target proteins. Involved in the elongation step rather than the initiation step of the polyglycylation reaction. Polyglycylates alpha-tubulin and beta-tubulin. Polyglycylates non-tubulin proteins such as nucleosome assembly protein NAP1. This Rattus norvegicus (Rat) protein is Protein polyglycylase TTLL10.